The primary structure comprises 178 residues: Translation initiation factor IF-3 (178 aa).

It belongs to the IF-3 family. In terms of assembly, monomer.

Its subcellular location is the cytoplasm. IF-3 binds to the 30S ribosomal subunit and shifts the equilibrium between 70S ribosomes and their 50S and 30S subunits in favor of the free subunits, thus enhancing the availability of 30S subunits on which protein synthesis initiation begins. This is Translation initiation factor IF-3 from Legionella pneumophila (strain Paris).